The sequence spans 290 residues: 6-phospho-5-dehydro-2-deoxy-D-gluconate aldolase (290 aa).

Residue aspartate 85 is the Proton donor of the active site. 2 residues coordinate Zn(2+): histidine 86 and histidine 180. Glycine 181 contacts dihydroxyacetone phosphate. Position 208 (histidine 208) interacts with Zn(2+). Dihydroxyacetone phosphate is bound by residues 209-211 and 230-233; these read GAS and NINT. Threonine 233 is modified (phosphothreonine).

This sequence belongs to the class II fructose-bisphosphate aldolase family. IolJ subfamily. The cofactor is Zn(2+).

It catalyses the reaction 6-phospho-5-dehydro-2-deoxy-D-gluconate = 3-oxopropanoate + dihydroxyacetone phosphate. Its pathway is polyol metabolism; myo-inositol degradation into acetyl-CoA; acetyl-CoA from myo-inositol: step 6/7. Functionally, produces dihydroxyacetone phosphate (DHAP or glycerone phosphate) and malonic semialdehyde (MSA or 3-oxopropanoate) from 6-phospho-5-dehydro-2-deoxy-D-gluconate (DKGP). This is 6-phospho-5-dehydro-2-deoxy-D-gluconate aldolase (iolJ) from Bacillus subtilis (strain 168).